The following is a 396-amino-acid chain: Elongation factor Tu (396 aa).

Positions lysine 10–glutamate 206 constitute a tr-type G domain. Residues glycine 19 to threonine 26 form a G1 region. Residue glycine 19 to threonine 26 participates in GTP binding. Threonine 26 contributes to the Mg(2+) binding site. Residues glycine 60–alanine 64 are G2. The tract at residues aspartate 81–glycine 84 is G3. GTP-binding positions include aspartate 81 to histidine 85 and asparagine 136 to aspartate 139. The interval asparagine 136–aspartate 139 is G4. Positions serine 174 to leucine 176 are G5.

This sequence belongs to the TRAFAC class translation factor GTPase superfamily. Classic translation factor GTPase family. EF-Tu/EF-1A subfamily. In terms of assembly, monomer.

The protein localises to the cytoplasm. The catalysed reaction is GTP + H2O = GDP + phosphate + H(+). GTP hydrolase that promotes the GTP-dependent binding of aminoacyl-tRNA to the A-site of ribosomes during protein biosynthesis. The chain is Elongation factor Tu from Alcanivorax borkumensis (strain ATCC 700651 / DSM 11573 / NCIMB 13689 / SK2).